The primary structure comprises 158 residues: SsrA-binding protein (158 aa).

The protein belongs to the SmpB family.

The protein resides in the cytoplasm. In terms of biological role, required for rescue of stalled ribosomes mediated by trans-translation. Binds to transfer-messenger RNA (tmRNA), required for stable association of tmRNA with ribosomes. tmRNA and SmpB together mimic tRNA shape, replacing the anticodon stem-loop with SmpB. tmRNA is encoded by the ssrA gene; the 2 termini fold to resemble tRNA(Ala) and it encodes a 'tag peptide', a short internal open reading frame. During trans-translation Ala-aminoacylated tmRNA acts like a tRNA, entering the A-site of stalled ribosomes, displacing the stalled mRNA. The ribosome then switches to translate the ORF on the tmRNA; the nascent peptide is terminated with the 'tag peptide' encoded by the tmRNA and targeted for degradation. The ribosome is freed to recommence translation, which seems to be the essential function of trans-translation. This chain is SsrA-binding protein, found in Acinetobacter baumannii (strain AB307-0294).